The chain runs to 484 residues: MSDRIRVRYAPSPTGYLHIGNARTALFNYLYAKHYNGDFVIRIEDTDKKRNLEDGETSQFDNLKWLGLDWDESVDKDNGYGPYRQSERQHIYQPLIDQLLAEDKAYKCYMTEEELEVEREAQIARGEMPRYGGQHAHLTEEQRQQFEAEGRQPSIRFRVPQNQTYSFDDMVKGNISFDSNGIGDWVIVKKDGIPTYNFAVAIDDHYMEISDVIRGDDHISNTPKQIMIYEAFGWEPPRFGHMSLIVNEERKKLSKRDGQILQFIEQYRDLGYLPEALFNFIALLGWSPEGEEEIFSKEEFIKIFDEKRLSKSPAFFDKQKLAWVNNQYMKQKDTETVFQLALPHLIKANLIPEVPSEEDLSWGRKLIALYQKEMSYAGEIVPLSEMFFKEMPALGEEEQQVINGEQVPELMTHLFSKLEALEPFEVAEIKKTIKEVQKETGIKGKQLFMPIRVAVTGQMHGPELPNTIEVLGKEKVLNRLKQYK.

Residues 11–21 (PSPTGYLHIGN) carry the 'HIGH' region motif. A 'KMSKS' region motif is present at residues 252–256 (KLSKR). Position 255 (Lys-255) interacts with ATP.

The protein belongs to the class-I aminoacyl-tRNA synthetase family. Glutamate--tRNA ligase type 1 subfamily. In terms of assembly, monomer.

Its subcellular location is the cytoplasm. The catalysed reaction is tRNA(Glu) + L-glutamate + ATP = L-glutamyl-tRNA(Glu) + AMP + diphosphate. Functionally, catalyzes the attachment of glutamate to tRNA(Glu) in a two-step reaction: glutamate is first activated by ATP to form Glu-AMP and then transferred to the acceptor end of tRNA(Glu). The sequence is that of Glutamate--tRNA ligase from Staphylococcus aureus (strain bovine RF122 / ET3-1).